The following is an 824-amino-acid chain: Glycerol-3-phosphate acyltransferase (824 aa).

Residues 302–307 (CHRSHM) carry the HXXXXD motif motif.

This sequence belongs to the GPAT/DAPAT family.

Its subcellular location is the cell inner membrane. It catalyses the reaction sn-glycerol 3-phosphate + an acyl-CoA = a 1-acyl-sn-glycero-3-phosphate + CoA. The protein operates within phospholipid metabolism; CDP-diacylglycerol biosynthesis; CDP-diacylglycerol from sn-glycerol 3-phosphate: step 1/3. This is Glycerol-3-phosphate acyltransferase from Actinobacillus pleuropneumoniae serotype 7 (strain AP76).